A 203-amino-acid chain; its full sequence is Thymidylate kinase (203 aa).

14–21 (GGEGIGKS) lines the ATP pocket.

It belongs to the thymidylate kinase family.

The catalysed reaction is dTMP + ATP = dTDP + ADP. Functionally, phosphorylation of dTMP to form dTDP in both de novo and salvage pathways of dTTP synthesis. This is Thymidylate kinase from Rickettsia africae (strain ESF-5).